Consider the following 254-residue polypeptide: Phosphoglycerate mutase 1 (254 aa).

Substrate-binding positions include 10-17 (RHGESAWN) and 23-24 (SG). His11 acts as the Tele-phosphohistidine intermediate in catalysis. Phosphoserine is present on residues Ser14 and Ser23. At Tyr26 the chain carries Phosphotyrosine. Ser31 carries the post-translational modification Phosphoserine. Residues Arg62, 89-92 (ERHY), and Lys100 contribute to the substrate site. Catalysis depends on Glu89, which acts as the Proton donor/acceptor. The residue at position 106 (Lys106) is an N6-acetyllysine. Residue 116–117 (RR) coordinates substrate. Phosphoserine is present on Ser118. Residue 187–188 (GN) coordinates substrate. An N6-acetyllysine; alternate modification is found at Lys251. An N6-succinyllysine; alternate modification is found at Lys251. Residues Lys253 and Lys254 each carry the N6-acetyllysine modification.

It belongs to the phosphoglycerate mutase family. BPG-dependent PGAM subfamily. As to quaternary structure, homodimer. In terms of processing, acetylated at Lys-253, Lys-253 and Lys-254 under high glucose condition. Acetylation increases catalytic activity. Under glucose restriction SIRT1 levels dramatically increase and it deacetylates the enzyme.

It carries out the reaction (2R)-2-phosphoglycerate = (2R)-3-phosphoglycerate. The enzyme catalyses (2R)-3-phospho-glyceroyl phosphate = (2R)-2,3-bisphosphoglycerate + H(+). In terms of biological role, catalyzes the interconversion of 2-phosphoglycerate and 3-phosphoglyceratea crucial step in glycolysis, by using 2,3-bisphosphoglycerate. Also catalyzes the interconversion of (2R)-2,3-bisphosphoglycerate and (2R)-3-phospho-glyceroyl phosphate. In Pongo abelii (Sumatran orangutan), this protein is Phosphoglycerate mutase 1.